The following is a 563-amino-acid chain: Coiled-coil domain-containing protein 63 (563 aa).

Residues 1–29 form a disordered region; sequence MSVLKKNRRKDSDTPQEPSEKAKEQQAEA. Over residues 10–29 the composition is skewed to basic and acidic residues; the sequence is KDSDTPQEPSEKAKEQQAEA. Coiled-coil stretches lie at residues 18–201, 233–291, and 341–422; these read PSEK…QLQH, AMKD…AKKH, and TELN…KKIN.

Functionally, plays a role in spermiogenesis. Involved in the elongation of flagella and the formation of sperm heads. The chain is Coiled-coil domain-containing protein 63 from Homo sapiens (Human).